The chain runs to 661 residues: WD repeat-containing protein 26 (661 aa).

Gly residues predominate over residues Met1 to Gly27. 2 disordered regions span residues Met1–Asn70 and Thr99–Lys118. Low complexity-rich tracts occupy residues Ala56 to Asn70 and Thr99 to Ser113. 2 positions are modified to phosphoserine: Ser121 and Ser123. Residues Ser123–Leu155 enclose the LisH domain. A CTLH domain is found at Glu156–Glu231. WD repeat units follow at residues Glu353–Lys392, Gly399–Arg438, Ser444–Glu484, Gln524–Lys563, Gly566–Glu608, and Gly611–Asn651.

Forms homooligomers. Identified in the CTLH complex that contains GID4, RANBP9 and/or RANBP10, MKLN1, MAEA, RMND5A (or alternatively its paralog RMND5B), GID8, ARMC8, WDR26 and YPEL5. Within this complex, MAEA, RMND5A (or alternatively its paralog RMND5B), GID8, WDR26, and RANBP9 and/or RANBP10 form the catalytic core, while GID4, MKLN1, ARMC8 and YPEL5 have ancillary roles. Interacts with DDB1-CUL4A/B E3 ligase complexes. Forms a complex composed of at least WDR26, a G-beta:gamma unit, and PLCB2. Interacts with AXIN1. In terms of tissue distribution, broadly expressed, with highest levels in heart and skeletal muscle.

The protein resides in the cytoplasm. It is found in the nucleus. Its subcellular location is the mitochondrion. G-beta-like protein involved in cell signal transduction. Acts as a negative regulator in MAPK signaling pathway. Functions as a scaffolding protein to promote G beta:gamma-mediated PLCB2 plasma membrane translocation and subsequent activation in leukocytes. Core component of the CTLH E3 ubiquitin-protein ligase complex that selectively accepts ubiquitin from UBE2H and mediates ubiquitination and subsequent proteasomal degradation of the transcription factor HBP1. Acts as a negative regulator of the canonical Wnt signaling pathway through preventing ubiquitination of beta-catenin CTNNB1 by the beta-catenin destruction complex, thus negatively regulating CTNNB1 degradation. Serves as a scaffold to coordinate PI3K/AKT pathway-driven cell growth and migration. Protects cells from oxidative stress-induced apoptosis via the down-regulation of AP-1 transcriptional activity as well as by inhibiting cytochrome c release from mitochondria. Also protects cells by promoting hypoxia-mediated autophagy and mitophagy. The protein is WD repeat-containing protein 26 (WDR26) of Homo sapiens (Human).